Consider the following 295-residue polypeptide: Alpha-soluble NSF attachment protein (295 aa).

The residue at position 1 (M1) is an N-acetylmethionine. Residues S26, S29, and S195 each carry the phosphoserine modification.

Belongs to the SNAP family. As to quaternary structure, interacts with PRKCABP, and disrupts the interaction between GRIA2 and PRKCABP, leading to the internalization of GRIA2. Found in a complex with VAMP8. Component of a SNARE-like complex that contains at least ZW10, USE1L, RINT1, STX18 and NAPA/SNAP-alpha. Interacts with VTI1A. Interacts with STX12. Interacts with GNA12 (via N-terminus); the interaction promotes CDH5 localization to plasma membrane.

It localises to the cell membrane. Functionally, required for vesicular transport between the endoplasmic reticulum and the Golgi apparatus. Together with GNA12 promotes CDH5 localization to plasma membrane. The chain is Alpha-soluble NSF attachment protein (Napa) from Mus musculus (Mouse).